Reading from the N-terminus, the 690-residue chain is UvrABC system protein C (690 aa).

A GIY-YIG domain is found at 15-94; sequence TDPGVYTFRD…IKRFNPRFNV (80 aa). The UVR domain maps to 207–242; sequence EPVLRRVRKEMEQASENLDFERAASLRDQLQAMQKS.

It belongs to the UvrC family. In terms of assembly, interacts with UvrB in an incision complex.

It localises to the cytoplasm. In terms of biological role, the UvrABC repair system catalyzes the recognition and processing of DNA lesions. UvrC both incises the 5' and 3' sides of the lesion. The N-terminal half is responsible for the 3' incision and the C-terminal half is responsible for the 5' incision. The sequence is that of UvrABC system protein C from Corynebacterium jeikeium (strain K411).